The chain runs to 141 residues: Nucleoside diphosphate kinase (141 aa).

ATP is bound by residues K11, F59, R87, T93, R104, and N114. H117 functions as the Pros-phosphohistidine intermediate in the catalytic mechanism.

Belongs to the NDK family. As to quaternary structure, homotetramer. Requires Mg(2+) as cofactor.

The protein resides in the cytoplasm. The catalysed reaction is a 2'-deoxyribonucleoside 5'-diphosphate + ATP = a 2'-deoxyribonucleoside 5'-triphosphate + ADP. It carries out the reaction a ribonucleoside 5'-diphosphate + ATP = a ribonucleoside 5'-triphosphate + ADP. Its function is as follows. Major role in the synthesis of nucleoside triphosphates other than ATP. The ATP gamma phosphate is transferred to the NDP beta phosphate via a ping-pong mechanism, using a phosphorylated active-site intermediate. In Photorhabdus laumondii subsp. laumondii (strain DSM 15139 / CIP 105565 / TT01) (Photorhabdus luminescens subsp. laumondii), this protein is Nucleoside diphosphate kinase.